The primary structure comprises 345 residues: Delta(6)-protoilludene synthase (345 aa).

Residues aspartate 84, asparagine 220, serine 224, and glutamate 228 each coordinate Mg(2+). Positions 84–88 match the DDXXD motif motif; it reads DEYSD. (2E,6E)-farnesyl diphosphate contacts are provided by arginine 309 and tyrosine 310.

Belongs to the terpene synthase family. Monomer. Mg(2+) is required as a cofactor.

It catalyses the reaction (2E,6E)-farnesyl diphosphate = Delta(6)-protoilludene + diphosphate. The protein operates within secondary metabolite biosynthesis. Functionally, delta(6)-protoilludene synthase, part of the gene cluster that mediates the biosynthesis of melleolides, a range of antifungal and phytotoxic polyketide derivatives composed of an orsellinic acid (OA) moiety esterified to various sesquiterpene alcohols. The first step in melleolides biosynthesis is performed by the delta(6)-protoilludene synthase PRO1 which catalyzes the cyclization of farnesyl diphosphate to protoilludene. The orsellinic acid synthase armB produces OA by condensing acetyl-CoA with 3 malonyl-CoA units in a three-round chain elongation reaction folowed by a C2-C7 ring closure. ArmB further catalyzes the trans-esterification of OA to the various sesquiterpene alcohols resulting from the hydroxylation of protoilludene. The melleolides cluster also includes 5 cytochrome P450 monooxygenases, 4 NAD(+)-dependent oxidoreductases, one flavin-dependent oxidoreductase, and one O-methyltransferase. The cytochrome P450 monooxygenases may be involved in protoilludene hydroxylation to elaborate melleolides with multiple alcohol groups, such as melleolide D, which carries alcohol functionalities at C-4, C-5, C-10, and C-13. The role of the NAD(+)-dependent enzymes remains unknown. Numerous melleolides, including arnamial, show 5'-O-methylation of the aromatic moiety which may be catalyzed by the methyltransferase encoded in the cluster. The flavin-dependent oxidoreductase might represent the dehydrogenase yielding the aldehyde in position 1 of arnamial and other melleolides. Finally, several halogenases, localized outside of the cluster, are able to catalyze the transfer of a single chlorine atom to the melleolide backbone, resulting in a 6'-chloromelleolide product. The polypeptide is Delta(6)-protoilludene synthase (Armillaria gallica (Bulbous honey fungus)).